The chain runs to 102 residues: MIPGEIITQIGEIELNSGRSTIQVIVANTGDRPIQIGSHFHFYEVNSALEFEREPTKGMRLNIPAGTAVRFEPGDEKEVELVAIAGSREIYGFNSLVNQKLE.

The protein belongs to the urease beta subunit family. As to quaternary structure, heterotrimer of UreA (gamma), UreB (beta) and UreC (alpha) subunits. Three heterotrimers associate to form the active enzyme.

Its subcellular location is the cytoplasm. It catalyses the reaction urea + 2 H2O + H(+) = hydrogencarbonate + 2 NH4(+). Its pathway is nitrogen metabolism; urea degradation; CO(2) and NH(3) from urea (urease route): step 1/1. The protein is Urease subunit beta of Trichodesmium erythraeum (strain IMS101).